Reading from the N-terminus, the 347-residue chain is Protein RecA (347 aa).

Residue 65 to 72 (GPESSGKT) coordinates ATP.

This sequence belongs to the RecA family.

The protein localises to the cytoplasm. In terms of biological role, can catalyze the hydrolysis of ATP in the presence of single-stranded DNA, the ATP-dependent uptake of single-stranded DNA by duplex DNA, and the ATP-dependent hybridization of homologous single-stranded DNAs. It interacts with LexA causing its activation and leading to its autocatalytic cleavage. The chain is Protein RecA from Aliivibrio salmonicida (strain LFI1238) (Vibrio salmonicida (strain LFI1238)).